The sequence spans 423 residues: 3-phosphoshikimate 1-carboxyvinyltransferase (423 aa).

Residues Lys-19, Ser-20, and Arg-24 each contribute to the 3-phosphoshikimate site. Lys-19 provides a ligand contact to phosphoenolpyruvate. Residues Gly-89 and Arg-118 each coordinate phosphoenolpyruvate. 3-phosphoshikimate contacts are provided by Ser-164, Ser-165, Gln-166, Ser-192, Asp-304, and Lys-331. Residue Gln-166 coordinates phosphoenolpyruvate. The active-site Proton acceptor is Asp-304. Residues Arg-335 and Arg-377 each coordinate phosphoenolpyruvate.

It belongs to the EPSP synthase family. Monomer.

It localises to the cytoplasm. It carries out the reaction 3-phosphoshikimate + phosphoenolpyruvate = 5-O-(1-carboxyvinyl)-3-phosphoshikimate + phosphate. It participates in metabolic intermediate biosynthesis; chorismate biosynthesis. In terms of biological role, catalyzes the transfer of the enolpyruvyl moiety of phosphoenolpyruvate (PEP) to the 5-hydroxyl of shikimate-3-phosphate (S3P) to produce enolpyruvyl shikimate-3-phosphate and inorganic phosphate. The polypeptide is 3-phosphoshikimate 1-carboxyvinyltransferase (Korarchaeum cryptofilum (strain OPF8)).